We begin with the raw amino-acid sequence, 1138 residues long: uncharacterized protein (1138 aa).

Disordered stretches follow at residues 985 to 1015 and 1094 to 1138; these read EKKL…MAQE and LVAT…QNKL. Residues 1110 to 1138 are compositionally biased toward acidic residues; it reads DDDEYEKYDSGIEDIETDVDEEEEVQNKL.

This is an uncharacterized protein from Ostreid herpesvirus 1 (isolate France) (OsHV-1).